The chain runs to 424 residues: 3-ketoacyl-CoA thiolase A, peroxisomal (424 aa).

Residues 1 to 26 (MHRLQVVLGHLAGRPESSSALQAAPC) constitute a peroxisome transit peptide. Residues 1–26 (MHRLQVVLGHLAGRPESSSALQAAPC) are PTS2-type peroxisomal targeting signal. The active-site Acyl-thioester intermediate is C123. Residues K173 and K234 each carry the N6-acetyllysine modification. Catalysis depends on proton acceptor residues H377 and C408.

Belongs to the thiolase-like superfamily. Thiolase family. Homodimer. Interacts (via PTS2-type peroxisomal targeting signal region) with PEX7; leading to its translocation into peroxisomes. Mainly expressed in liver and intestine.

It is found in the peroxisome. It catalyses the reaction an acyl-CoA + acetyl-CoA = a 3-oxoacyl-CoA + CoA. The enzyme catalyses 2 acetyl-CoA = acetoacetyl-CoA + CoA. It carries out the reaction tetradecanoyl-CoA + acetyl-CoA = 3-oxohexadecanoyl-CoA + CoA. The catalysed reaction is hexanoyl-CoA + acetyl-CoA = 3-oxooctanoyl-CoA + CoA. It catalyses the reaction 3-oxohexadecanedioyl-CoA + CoA = tetradecanedioyl-CoA + acetyl-CoA. The enzyme catalyses 3-oxo-(6Z,9Z,12Z,15Z,18Z,21Z)-tetracosahexaenoyl-CoA + CoA = (4Z,7Z,10Z,13Z,16Z,19Z)-docosahexaenoyl-CoA + acetyl-CoA. It functions in the pathway lipid metabolism; peroxisomal fatty acid beta-oxidation. Functionally, responsible for the thiolytic cleavage of straight chain 3-keto fatty acyl-CoAs (3-oxoacyl-CoAs). Plays an important role in fatty acid peroxisomal beta-oxidation. Catalyzes the cleavage of short, medium, long, and very long straight chain 3-oxoacyl-CoAs. The sequence is that of 3-ketoacyl-CoA thiolase A, peroxisomal from Mus musculus (Mouse).